The sequence spans 593 residues: Kelch-like protein 2 (593 aa).

The interval 1-28 (METPPLPPACTKQGHQKPLDSKDDNTEK) is disordered. Basic and acidic residues predominate over residues 17-28 (KPLDSKDDNTEK). A BTB domain is found at 56-123 (CDVTIVAEDM…VYTAEIQVTE (68 aa)). Kelch repeat units lie at residues 308-353 (LMVV…YMAG), 354-400 (LVFA…VLNG), 402-447 (LYAV…VVGG), 449-496 (LYAV…VLNN), 497-543 (LLYA…AVNG), and 545-591 (LYVV…VIDK).

As to quaternary structure, component of the BCR(KLHL2) E3 ubiquitin ligase complex, at least composed of CUL3 and KLHL2 and RBX1. Binds actin. Interacts with KLHL12. Interacts (via N-terminus) with FYN (via SH3 domain). Ubiquitous. Detected throughout the brain.

It localises to the cytoplasm. The protein resides in the cytoskeleton. Its subcellular location is the cell projection. It is found in the ruffle. The protein localises to the lamellipodium. It localises to the cytosol. It participates in protein modification; protein ubiquitination. In terms of biological role, substrate-specific adapter of a BCR (BTB-CUL3-RBX1) E3 ubiquitin ligase complex that mediates the ubiquitination of target proteins, such as NPTXR, WNK1, WNK3 and WNK4, leading most often to their proteasomal degradation. The BCR(KLHL2) complex catalyzes ubiquitination and degradation of NPTXR. Responsible for degradative ubiquitination of the WNK kinases WNK1, WNK3 and WNK4. Plays a role in the reorganization of the actin cytoskeleton. Promotes growth of cell projections in oligodendrocyte precursors. This chain is Kelch-like protein 2, found in Homo sapiens (Human).